We begin with the raw amino-acid sequence, 428 residues long: Gamma-glutamyl phosphate reductase (428 aa).

The protein belongs to the gamma-glutamyl phosphate reductase family.

The protein resides in the cytoplasm. It carries out the reaction L-glutamate 5-semialdehyde + phosphate + NADP(+) = L-glutamyl 5-phosphate + NADPH + H(+). The protein operates within amino-acid biosynthesis; L-proline biosynthesis; L-glutamate 5-semialdehyde from L-glutamate: step 2/2. Catalyzes the NADPH-dependent reduction of L-glutamate 5-phosphate into L-glutamate 5-semialdehyde and phosphate. The product spontaneously undergoes cyclization to form 1-pyrroline-5-carboxylate. This Afipia carboxidovorans (strain ATCC 49405 / DSM 1227 / KCTC 32145 / OM5) (Oligotropha carboxidovorans) protein is Gamma-glutamyl phosphate reductase.